Consider the following 141-residue polypeptide: Putative pre-16S rRNA nuclease (141 aa).

Belongs to the YqgF nuclease family.

The protein resides in the cytoplasm. Could be a nuclease involved in processing of the 5'-end of pre-16S rRNA. This chain is Putative pre-16S rRNA nuclease, found in Dictyoglomus turgidum (strain DSM 6724 / Z-1310).